Consider the following 507-residue polypeptide: ATP synthase subunit alpha, chloroplastic (507 aa).

ATP is bound at residue 170–177 (GDRQTGKT).

It belongs to the ATPase alpha/beta chains family. F-type ATPases have 2 components, CF(1) - the catalytic core - and CF(0) - the membrane proton channel. CF(1) has five subunits: alpha(3), beta(3), gamma(1), delta(1), epsilon(1). CF(0) has four main subunits: a, b, b' and c.

It is found in the plastid. The protein localises to the chloroplast thylakoid membrane. It catalyses the reaction ATP + H2O + 4 H(+)(in) = ADP + phosphate + 5 H(+)(out). Functionally, produces ATP from ADP in the presence of a proton gradient across the membrane. The alpha chain is a regulatory subunit. The sequence is that of ATP synthase subunit alpha, chloroplastic from Oenothera glazioviana (Large-flowered evening primrose).